A 332-amino-acid chain; its full sequence is Ferredoxin--NADP reductase 1 (332 aa).

Residues aspartate 35, lysine 43, phenylalanine 48, valine 88, phenylalanine 123, aspartate 284, and threonine 325 each contribute to the FAD site.

This sequence belongs to the ferredoxin--NADP reductase type 2 family. Homodimer. Requires FAD as cofactor.

It carries out the reaction 2 reduced [2Fe-2S]-[ferredoxin] + NADP(+) + H(+) = 2 oxidized [2Fe-2S]-[ferredoxin] + NADPH. This Listeria monocytogenes serovar 1/2a (strain ATCC BAA-679 / EGD-e) protein is Ferredoxin--NADP reductase 1.